A 147-amino-acid chain; its full sequence is D-aminoacyl-tRNA deacylase (147 aa).

Residues 137–138 (GP) carry the Gly-cisPro motif, important for rejection of L-amino acids motif.

This sequence belongs to the DTD family. In terms of assembly, homodimer.

The protein resides in the cytoplasm. The catalysed reaction is glycyl-tRNA(Ala) + H2O = tRNA(Ala) + glycine + H(+). The enzyme catalyses a D-aminoacyl-tRNA + H2O = a tRNA + a D-alpha-amino acid + H(+). Its function is as follows. An aminoacyl-tRNA editing enzyme that deacylates mischarged D-aminoacyl-tRNAs. Also deacylates mischarged glycyl-tRNA(Ala), protecting cells against glycine mischarging by AlaRS. Acts via tRNA-based rather than protein-based catalysis; rejects L-amino acids rather than detecting D-amino acids in the active site. By recycling D-aminoacyl-tRNA to D-amino acids and free tRNA molecules, this enzyme counteracts the toxicity associated with the formation of D-aminoacyl-tRNA entities in vivo and helps enforce protein L-homochirality. This is D-aminoacyl-tRNA deacylase from Bacillus licheniformis (strain ATCC 14580 / DSM 13 / JCM 2505 / CCUG 7422 / NBRC 12200 / NCIMB 9375 / NCTC 10341 / NRRL NRS-1264 / Gibson 46).